The following is a 433-amino-acid chain: tRNA-2-methylthio-N(6)-dimethylallyladenosine synthase (433 aa).

Residues 3 to 118 enclose the MTTase N-terminal domain; that stretch reads KKLFIQTLGC…ISRVIHQEKA (116 aa). Positions 12, 49, 81, 150, 154, and 157 each coordinate [4Fe-4S] cluster. The 234-residue stretch at 136 to 369 folds into the Radical SAM core domain; it reads SRNDYKAMVN…QARHKEILEE (234 aa). The region spanning 372-433 is the TRAM domain; the sequence is QKEVGAIHSV…YRAFLIGEPL (62 aa).

The protein belongs to the methylthiotransferase family. MiaB subfamily. As to quaternary structure, monomer. The cofactor is [4Fe-4S] cluster.

The protein resides in the cytoplasm. The enzyme catalyses N(6)-dimethylallyladenosine(37) in tRNA + (sulfur carrier)-SH + AH2 + 2 S-adenosyl-L-methionine = 2-methylsulfanyl-N(6)-dimethylallyladenosine(37) in tRNA + (sulfur carrier)-H + 5'-deoxyadenosine + L-methionine + A + S-adenosyl-L-homocysteine + 2 H(+). Its function is as follows. Catalyzes the methylthiolation of N6-(dimethylallyl)adenosine (i(6)A), leading to the formation of 2-methylthio-N6-(dimethylallyl)adenosine (ms(2)i(6)A) at position 37 in tRNAs that read codons beginning with uridine. This is tRNA-2-methylthio-N(6)-dimethylallyladenosine synthase from Wolinella succinogenes (strain ATCC 29543 / DSM 1740 / CCUG 13145 / JCM 31913 / LMG 7466 / NCTC 11488 / FDC 602W) (Vibrio succinogenes).